Reading from the N-terminus, the 783-residue chain is E3 UFM1-protein ligase 1 homolog (783 aa).

A disordered region spans residues 406 to 476; sequence TLGTTHDADE…DAVQQSANSS (71 aa). The segment covering 446 to 457 has biased composition (basic residues); sequence KSTKKHQRGRAA.

Belongs to the UFL1 family.

Its function is as follows. E3 UFM1-protein ligase that mediates ufmylation of target proteins. The protein is E3 UFM1-protein ligase 1 homolog of Drosophila grimshawi (Hawaiian fruit fly).